We begin with the raw amino-acid sequence, 34 residues long: Cytochrome b6-f complex subunit 8 (34 aa).

A helical membrane pass occupies residues L3 to V23.

It belongs to the PetN family. The 4 large subunits of the cytochrome b6-f complex are cytochrome b6, subunit IV (17 kDa polypeptide, PetD), cytochrome f and the Rieske protein, while the 4 small subunits are PetG, PetL, PetM and PetN. The complex functions as a dimer.

It is found in the cellular thylakoid membrane. Its function is as follows. Component of the cytochrome b6-f complex, which mediates electron transfer between photosystem II (PSII) and photosystem I (PSI), cyclic electron flow around PSI, and state transitions. This is Cytochrome b6-f complex subunit 8 from Synechococcus elongatus (strain ATCC 33912 / PCC 7942 / FACHB-805) (Anacystis nidulans R2).